The primary structure comprises 276 residues: NADPH-dependent 7-cyano-7-deazaguanine reductase (276 aa).

Position 83-85 (83-85 (IES)) interacts with substrate. 85–86 (SK) lines the NADPH pocket. Cysteine 184 serves as the catalytic Thioimide intermediate. The active-site Proton donor is the aspartate 191. 223 to 224 (HE) is a binding site for substrate. An NADPH-binding site is contributed by 252-253 (RG).

It belongs to the GTP cyclohydrolase I family. QueF type 2 subfamily. As to quaternary structure, homodimer.

It localises to the cytoplasm. The catalysed reaction is 7-aminomethyl-7-carbaguanine + 2 NADP(+) = 7-cyano-7-deazaguanine + 2 NADPH + 3 H(+). Its pathway is tRNA modification; tRNA-queuosine biosynthesis. Its function is as follows. Catalyzes the NADPH-dependent reduction of 7-cyano-7-deazaguanine (preQ0) to 7-aminomethyl-7-deazaguanine (preQ1). In Pseudomonas savastanoi pv. phaseolicola (strain 1448A / Race 6) (Pseudomonas syringae pv. phaseolicola (strain 1448A / Race 6)), this protein is NADPH-dependent 7-cyano-7-deazaguanine reductase.